Here is a 131-residue protein sequence, read N- to C-terminus: Type-5 thionin (131 aa).

A signal peptide spans 1–29 (MGGGQKGLESAIVCLLVLGLVLEQVQVEG). A propeptide spans 67–131 (LASVRSSDEP…GDTLLASLDD (65 aa)) (acidic domain).

It belongs to the plant thionin (TC 1.C.44) family. In terms of processing, is disulfide-linked. As to expression, developing endosperm.

The protein localises to the secreted. Its function is as follows. Thionins are small plant proteins which are toxic to animal cells. They seem to exert their toxic effect at the level of the cell membrane. Their precise function is not known. The chain is Type-5 thionin (TTHV) from Triticum aestivum (Wheat).